The following is a 649-amino-acid chain: Centrosomal protein of 63 kDa-A (649 aa).

2 coiled-coil regions span residues 19–185 (DSCE…YQHQ) and 222–556 (EEEL…DAAS). Serine 560 is subject to Phosphoserine; by atm and atr. A coiled-coil region spans residues 612–645 (FLQEEEQRSHELLQRLNAHIEELKQESQRTVEHF).

Belongs to the CEP63 family. Post-translationally, phosphorylation at Ser-560 by atm and atr promotes its delocalization from the centrosome and impairs its ability to promote centrosome dependent spindle assembly.

It is found in the cytoplasm. It localises to the cytoskeleton. The protein localises to the microtubule organizing center. Its subcellular location is the centrosome. The protein resides in the centriole. Required for normal spindle assembly. Plays a key role in mother-centriole-dependent centriole duplication. Plays a role in DNA damage response. Following DNA damage, such as double-strand breaks (DSBs), is removed from centrosomes; this leads to the inactivation of spindle assembly and delay in mitotic progression. The chain is Centrosomal protein of 63 kDa-A (cep63-a) from Xenopus laevis (African clawed frog).